The sequence spans 229 residues: Orotate phosphoribosyltransferase (229 aa).

5-phospho-alpha-D-ribose 1-diphosphate contacts are provided by residues arginine 107, lysine 108, lysine 111, histidine 113, and 133-141 (EDLTTAGGS). Orotate is bound at residue threonine 137.

Belongs to the purine/pyrimidine phosphoribosyltransferase family. PyrE subfamily. Homodimer. Mg(2+) serves as cofactor.

The enzyme catalyses orotidine 5'-phosphate + diphosphate = orotate + 5-phospho-alpha-D-ribose 1-diphosphate. Its pathway is pyrimidine metabolism; UMP biosynthesis via de novo pathway; UMP from orotate: step 1/2. Catalyzes the transfer of a ribosyl phosphate group from 5-phosphoribose 1-diphosphate to orotate, leading to the formation of orotidine monophosphate (OMP). The protein is Orotate phosphoribosyltransferase of Rhizobium johnstonii (strain DSM 114642 / LMG 32736 / 3841) (Rhizobium leguminosarum bv. viciae).